We begin with the raw amino-acid sequence, 305 residues long: 2-pyrone-4,6-dicarbaxylate hydrolase (305 aa).

Substrate is bound by residues 32–34, tyrosine 50, threonine 78, arginine 125, arginine 131, tyrosine 158, and histidine 182; that span reads HCH. The active-site Proton acceptor is aspartate 258. Residue asparagine 263 coordinates substrate.

The protein belongs to the metallo-dependent hydrolases superfamily. PDC hydrolase family.

The enzyme catalyses 2-oxo-2H-pyran-4,6-dicarboxylate + H2O = (1E)-4-oxobut-1-ene-1,2,4-tricarboxylate + H(+). Its activity is regulated as follows. Strongly inhibited by 1 mM Zn(2+), Cu(2+), Mn(2+) and Co(2+) ions. Also inhibited by 5,5'-dithiobis(2-nitrobenzoic acid) (Ellman reagent) in vitro. Functionally, involved in the degradation of aromatic compounds via the protocatechuate 4,5-cleavage pathway. Catalyzes the hydrolysis of 2-pyrone-4,6-dicarboxylate (PDC) to oxalomesaconate (OMA). Also catalyzes the reverse reaction. The polypeptide is 2-pyrone-4,6-dicarbaxylate hydrolase (Comamonas testosteroni (Pseudomonas testosteroni)).